The sequence spans 308 residues: Putative mitochondrial transporter UCP3 (308 aa).

Over 1–10 the chain is Mitochondrial intermembrane; it reads MVGLKPPEVP. Residues 11–32 traverse the membrane as a helical segment; it reads PTTAVKLLGAGTAACFADLLTF. Solcar repeat units lie at residues 11 to 102, 111 to 202, and 211 to 296; these read PTTA…VKQL, SSIT…IKEK, and DNLP…LKRA. At 33 to 73 the chain is on the mitochondrial matrix side; the sequence is PLDTAKVRLQIQGENQAARSAQYRGVLGTILTMVRNEGPRS. Residues 74 to 96 form a helical membrane-spanning segment; sequence PYNGLVAGLQRQMSFASIRIGLY. Over 97-116 the chain is Mitochondrial intermembrane; the sequence is DSVKQLYTPKGSDHSSITTR. A helical transmembrane segment spans residues 117–133; the sequence is ILAGCTTGAMAVTCAQP. The Mitochondrial matrix segment spans residues 134–179; sequence TDVVKVRFQASIHAGPRSNRKYSGTMDAYRTIAREEGVRGLWKGIL. The helical transmembrane segment at 180–196 threads the bilayer; sequence PNITRNAIVNCAEMVTY. At 197-213 the chain is on the mitochondrial intermembrane side; the sequence is DVIKEKVLDYHLLTDNL. The chain crosses the membrane as a helical span at residues 214–233; it reads PCHFVSAFGAGFCATVVASP. At 234 to 267 the chain is on the mitochondrial matrix side; the sequence is VDVVKTRYMNSPPGQYQNPLDCMLKMVTQEGPTA. A helical transmembrane segment spans residues 268–290; sequence FYKGFTPSFLRLGSWNVVMFVSY. The purine nucleotide binding stretch occupies residues 275–297; it reads SFLRLGSWNVVMFVSYEQLKRAL. Residues 291–308 are Mitochondrial intermembrane-facing; that stretch reads EQLKRALMKVQMLRESPF.

The protein belongs to the mitochondrial carrier (TC 2.A.29) family. As to quaternary structure, interacts with HAX1; the interaction is direct and calcium-dependent.

The protein resides in the mitochondrion inner membrane. Its function is as follows. Putative transmembrane transporter that plays a role in mitochondrial metabolism via an as yet unclear mechanism. Originally, this mitochondrial protein was thought to act as a proton transmembrane transporter from the mitochondrial intermembrane space into the matrix, causing proton leaks through the inner mitochondrial membrane, thereby uncoupling mitochondrial membrane potential generation from ATP synthesis. However, this function is controversial and uncoupling may not be the function, or at least not the main function, but rather a consequence of more conventional metabolite transporter activity. The protein is Putative mitochondrial transporter UCP3 of Sus scrofa (Pig).